The chain runs to 203 residues: N-(5'-phosphoribosyl)anthranilate isomerase (203 aa).

This sequence belongs to the TrpF family.

The enzyme catalyses N-(5-phospho-beta-D-ribosyl)anthranilate = 1-(2-carboxyphenylamino)-1-deoxy-D-ribulose 5-phosphate. It functions in the pathway amino-acid biosynthesis; L-tryptophan biosynthesis; L-tryptophan from chorismate: step 3/5. In Geobacter sulfurreducens (strain ATCC 51573 / DSM 12127 / PCA), this protein is N-(5'-phosphoribosyl)anthranilate isomerase.